The sequence spans 118 residues: UPF0102 protein DICTH_1420 (118 aa).

This sequence belongs to the UPF0102 family.

This chain is UPF0102 protein DICTH_1420, found in Dictyoglomus thermophilum (strain ATCC 35947 / DSM 3960 / H-6-12).